Consider the following 258-residue polypeptide: MLAKRIIPCLDVRDGQVVKGVQFRNHEIIGDIVPLAKRYAEEGADELVFYDITASSDGRVVDKSWVSRVAEVIDIPFCVAGGIKSLEDAAKILSFGADKISINSPALADPTLITRLADRFGVQCIVVGIDTWYDAETGKYHVNQYTGDESRTRVTQWETLDWVQEVQKRGAGEIVLNMMNQDGVRNGYDLEQLKKVREVCHVPLIASGGAGTMEHFLEAFRDADVDGALAASVFHKQIINIGELKAYLATQGVEIRIC.

Active-site residues include Asp11 and Asp130.

The protein belongs to the HisA/HisF family. As to quaternary structure, heterodimer of HisH and HisF.

The protein localises to the cytoplasm. The catalysed reaction is 5-[(5-phospho-1-deoxy-D-ribulos-1-ylimino)methylamino]-1-(5-phospho-beta-D-ribosyl)imidazole-4-carboxamide + L-glutamine = D-erythro-1-(imidazol-4-yl)glycerol 3-phosphate + 5-amino-1-(5-phospho-beta-D-ribosyl)imidazole-4-carboxamide + L-glutamate + H(+). The protein operates within amino-acid biosynthesis; L-histidine biosynthesis; L-histidine from 5-phospho-alpha-D-ribose 1-diphosphate: step 5/9. In terms of biological role, IGPS catalyzes the conversion of PRFAR and glutamine to IGP, AICAR and glutamate. The HisF subunit catalyzes the cyclization activity that produces IGP and AICAR from PRFAR using the ammonia provided by the HisH subunit. The polypeptide is Imidazole glycerol phosphate synthase subunit HisF (Escherichia coli O127:H6 (strain E2348/69 / EPEC)).